The following is a 112-amino-acid chain: Protein 4.2 (112 aa).

The segment at 64–93 (KPDGLNHQVTQGKKSHTQSQQTGPTTLTSD) is disordered. The span at 70-92 (HQVTQGKKSHTQSQQTGPTTLTS) shows a compositional bias: polar residues.

In Escherichia phage T7 (Bacteriophage T7), this protein is Protein 4.2.